The primary structure comprises 164 residues: Zinc finger A20 and AN1 domain-containing stress-associated protein 1 (164 aa).

The segment at A16 to S50 adopts an A20-type zinc-finger fold. Zn(2+) is bound by residues C22, C26, C38, and C41. Residues S48–P58 show a composition bias toward low complexity. The interval S48 to P81 is disordered. The segment at T99–A145 adopts an AN1-type zinc-finger fold. 8 residues coordinate Zn(2+): C105, C108, C119, C121, C126, H129, H135, and C137.

Functionally, may be involved in environmental stress response. The chain is Zinc finger A20 and AN1 domain-containing stress-associated protein 1 (SAP1) from Oryza sativa subsp. indica (Rice).